Consider the following 489-residue polypeptide: MNPRPVRPGGSLQQSLLALGSLSVAVGLAVWQQRTLGRGRSDSVTAVERPETTFSDVAGLIEAKEELAEIVTFLRDPERFRRMGARMPRGVLLAGPPGTGKTLLARAVAGEAGVPFFAMSASQFVEVYVGVGAKRVRDLFAAARKASPAIVFIDEIDAIGRRRGDSQSHQEYEQTLNQVLVELDGFHPRQAVVVIAATNRSDILDPALLRPGRFDRRVELSLPDRAERAAILRVHAQDKPLAPDVDLDALAARTVGLSGADLENTLNEAALLALRRGGDEITQADLEEAVDRVIAGPSRRSRALSARERETIAVHEAGHALVAHQLASADAPRRVTILGRGQMGGATVLAPDEDRRLWTRGQFLDRLAVLLGGYAAEEYRYGEVTTGSSGDLSQASALAQAMVTTYGMGKSLRGRAFDANGPVSDETSRAIDEEVSALVSEALELASRTIANAAHLLDALVAALLAEETLDEARLAAILGPRPARPAMN.

Over 1–14 (MNPRPVRPGGSLQQ) the chain is Cytoplasmic. Residues 15-31 (SLLALGSLSVAVGLAVW) form a helical membrane-spanning segment. The Extracellular portion of the chain corresponds to 32–489 (QQRTLGRGRS…GPRPARPAMN (458 aa)). 95–102 (GPPGTGKT) is a binding site for ATP. H315 contacts Zn(2+). E316 is a catalytic residue. 2 residues coordinate Zn(2+): H319 and D391.

This sequence in the central section; belongs to the AAA ATPase family. It in the C-terminal section; belongs to the peptidase M41 family. Homohexamer. Zn(2+) serves as cofactor.

The protein localises to the cell membrane. Functionally, acts as a processive, ATP-dependent zinc metallopeptidase for both cytoplasmic and membrane proteins. Plays a role in the quality control of integral membrane proteins. The sequence is that of ATP-dependent zinc metalloprotease FtsH 3 from Sphaerobacter thermophilus (strain ATCC 49802 / DSM 20745 / KCCM 41009 / NCIMB 13125 / S 6022).